Reading from the N-terminus, the 251-residue chain is Hydroxyacylglutathione hydrolase (251 aa).

Residues histidine 58, histidine 60, aspartate 62, histidine 63, histidine 116, aspartate 135, and histidine 173 each contribute to the Zn(2+) site.

The protein belongs to the metallo-beta-lactamase superfamily. Glyoxalase II family. Monomer. Zn(2+) is required as a cofactor.

It carries out the reaction an S-(2-hydroxyacyl)glutathione + H2O = a 2-hydroxy carboxylate + glutathione + H(+). Its pathway is secondary metabolite metabolism; methylglyoxal degradation; (R)-lactate from methylglyoxal: step 2/2. Functionally, thiolesterase that catalyzes the hydrolysis of S-D-lactoyl-glutathione to form glutathione and D-lactic acid. The protein is Hydroxyacylglutathione hydrolase of Bdellovibrio bacteriovorus (strain ATCC 15356 / DSM 50701 / NCIMB 9529 / HD100).